A 378-amino-acid chain; its full sequence is Pyrimidine monooxygenase RutA (378 aa).

FMN contacts are provided by residues 65-66, N131, E140, 156-157, and S206; these read IK and RY.

Belongs to the NtaA/SnaA/DszA monooxygenase family. RutA subfamily.

The catalysed reaction is uracil + FMNH2 + NADH + O2 = (Z)-3-ureidoacrylate + FMN + NAD(+) + H2O + H(+). The enzyme catalyses thymine + FMNH2 + NADH + O2 = (Z)-2-methylureidoacrylate + FMN + NAD(+) + H2O + H(+). Functionally, catalyzes the pyrimidine ring opening between N-3 and C-4 by an unusual flavin hydroperoxide-catalyzed mechanism, adding oxygen atoms in the process to yield ureidoacrylate peracid, that immediately reacts with FMN forming ureidoacrylate and FMN-N(5)-oxide. The FMN-N(5)-oxide reacts spontaneously with NADH to produce FMN. Requires the flavin reductase RutF to regenerate FMN in vivo. This chain is Pyrimidine monooxygenase RutA, found in Cronobacter turicensis (strain DSM 18703 / CCUG 55852 / LMG 23827 / z3032).